The sequence spans 179 residues: Large ribosomal subunit protein uL6 (179 aa).

Belongs to the universal ribosomal protein uL6 family. In terms of assembly, part of the 50S ribosomal subunit.

In terms of biological role, this protein binds to the 23S rRNA, and is important in its secondary structure. It is located near the subunit interface in the base of the L7/L12 stalk, and near the tRNA binding site of the peptidyltransferase center. The chain is Large ribosomal subunit protein uL6 from Mycobacterium leprae (strain Br4923).